A 243-amino-acid polypeptide reads, in one-letter code: Uridylate kinase (243 aa).

Residue 15-18 (KLSG) participates in ATP binding. The involved in allosteric activation by GTP stretch occupies residues 23-28 (GEEGFG). G57 contacts UMP. Positions 58 and 62 each coordinate ATP. UMP contacts are provided by residues D77 and 138–145 (TGNPFCTT). T165, Y171, and D174 together coordinate ATP.

It belongs to the UMP kinase family. As to quaternary structure, homohexamer.

It localises to the cytoplasm. It carries out the reaction UMP + ATP = UDP + ADP. It functions in the pathway pyrimidine metabolism; CTP biosynthesis via de novo pathway; UDP from UMP (UMPK route): step 1/1. Its activity is regulated as follows. Allosterically activated by GTP. Inhibited by UTP. Catalyzes the reversible phosphorylation of UMP to UDP. This chain is Uridylate kinase, found in Shewanella denitrificans (strain OS217 / ATCC BAA-1090 / DSM 15013).